Reading from the N-terminus, the 566-residue chain is NAD-dependent malic enzyme (566 aa).

Tyr105 acts as the Proton donor in catalysis. Arg158 serves as a coordination point for NAD(+). Residue Lys176 is the Proton acceptor of the active site. A divalent metal cation contacts are provided by Glu247, Asp248, and Asp271. NAD(+) is bound by residues Asp271 and Asn419.

This sequence belongs to the malic enzymes family. As to quaternary structure, homotetramer. Mg(2+) serves as cofactor. It depends on Mn(2+) as a cofactor.

It carries out the reaction (S)-malate + NAD(+) = pyruvate + CO2 + NADH. The catalysed reaction is oxaloacetate + H(+) = pyruvate + CO2. The polypeptide is NAD-dependent malic enzyme (Acinetobacter baylyi (strain ATCC 33305 / BD413 / ADP1)).